The sequence spans 496 residues: Probable cytosol aminopeptidase (496 aa).

Lys266 and Asp271 together coordinate Mn(2+). The active site involves Lys278. Asp290, Asp349, and Glu351 together coordinate Mn(2+). Residue Arg353 is part of the active site.

Belongs to the peptidase M17 family. Mn(2+) serves as cofactor.

It is found in the cytoplasm. It carries out the reaction Release of an N-terminal amino acid, Xaa-|-Yaa-, in which Xaa is preferably Leu, but may be other amino acids including Pro although not Arg or Lys, and Yaa may be Pro. Amino acid amides and methyl esters are also readily hydrolyzed, but rates on arylamides are exceedingly low.. The enzyme catalyses Release of an N-terminal amino acid, preferentially leucine, but not glutamic or aspartic acids.. Functionally, presumably involved in the processing and regular turnover of intracellular proteins. Catalyzes the removal of unsubstituted N-terminal amino acids from various peptides. The chain is Probable cytosol aminopeptidase from Trichodesmium erythraeum (strain IMS101).